The sequence spans 691 residues: Elongation factor G (691 aa).

The region spanning 8-283 (EDYRNFGIMA…AVVDYLPTPI (276 aa)) is the tr-type G domain. GTP-binding positions include 17 to 24 (AHIDAGKT), 81 to 85 (DTPGH), and 135 to 138 (NKMD).

Belongs to the TRAFAC class translation factor GTPase superfamily. Classic translation factor GTPase family. EF-G/EF-2 subfamily.

It localises to the cytoplasm. Catalyzes the GTP-dependent ribosomal translocation step during translation elongation. During this step, the ribosome changes from the pre-translocational (PRE) to the post-translocational (POST) state as the newly formed A-site-bound peptidyl-tRNA and P-site-bound deacylated tRNA move to the P and E sites, respectively. Catalyzes the coordinated movement of the two tRNA molecules, the mRNA and conformational changes in the ribosome. The chain is Elongation factor G from Beijerinckia indica subsp. indica (strain ATCC 9039 / DSM 1715 / NCIMB 8712).